The primary structure comprises 101 residues: UPF0125 protein VC_0850 (101 aa).

Belongs to the UPF0125 (RnfH) family.

The sequence is that of UPF0125 protein VC_0850 from Vibrio cholerae serotype O1 (strain ATCC 39315 / El Tor Inaba N16961).